A 621-amino-acid polypeptide reads, in one-letter code: 1-deoxy-D-xylulose-5-phosphate synthase (621 aa).

Thiamine diphosphate-binding positions include H80 and 121-123; that span reads GHS. D152 is a Mg(2+) binding site. Residues 153 to 154, N181, Y288, and E370 contribute to the thiamine diphosphate site; that span reads GA. N181 serves as a coordination point for Mg(2+).

This sequence belongs to the transketolase family. DXPS subfamily. In terms of assembly, homodimer. Mg(2+) serves as cofactor. It depends on thiamine diphosphate as a cofactor.

The enzyme catalyses D-glyceraldehyde 3-phosphate + pyruvate + H(+) = 1-deoxy-D-xylulose 5-phosphate + CO2. It participates in metabolic intermediate biosynthesis; 1-deoxy-D-xylulose 5-phosphate biosynthesis; 1-deoxy-D-xylulose 5-phosphate from D-glyceraldehyde 3-phosphate and pyruvate: step 1/1. Catalyzes the acyloin condensation reaction between C atoms 2 and 3 of pyruvate and glyceraldehyde 3-phosphate to yield 1-deoxy-D-xylulose-5-phosphate (DXP). In Pseudoalteromonas atlantica (strain T6c / ATCC BAA-1087), this protein is 1-deoxy-D-xylulose-5-phosphate synthase.